The sequence spans 916 residues: Alanine--tRNA ligase (916 aa).

Residues His611, His615, Cys714, and His718 each coordinate Zn(2+).

Belongs to the class-II aminoacyl-tRNA synthetase family. It depends on Zn(2+) as a cofactor.

The protein resides in the cytoplasm. It catalyses the reaction tRNA(Ala) + L-alanine + ATP = L-alanyl-tRNA(Ala) + AMP + diphosphate. Catalyzes the attachment of alanine to tRNA(Ala) in a two-step reaction: alanine is first activated by ATP to form Ala-AMP and then transferred to the acceptor end of tRNA(Ala). Also edits incorrectly charged Ser-tRNA(Ala) and Gly-tRNA(Ala) via its editing domain. The sequence is that of Alanine--tRNA ligase from Methanospirillum hungatei JF-1 (strain ATCC 27890 / DSM 864 / NBRC 100397 / JF-1).